The chain runs to 220 residues: Cell division protein DedD (220 aa).

The helical transmembrane segment at 9–29 (LVGTIVLVALGVIVLPGLLDG) threads the bilayer. 2 disordered regions span residues 46–84 (KAGD…AAPS) and 97–137 (FEPE…EEKA). Positions 57 to 70 (PAATQALPTQPPEG) are enriched in low complexity. Residues 100 to 109 (EPAPVAPPKP) show a composition bias toward pro residues. Composition is skewed to basic and acidic residues over residues 110-119 (KPVEPPKPKV) and 127-137 (PEPKPVVEEKA). Residues 138-217 (APTGKAYVVQ…SGLSGVVMGY (80 aa)) form the SPOR domain.

The protein belongs to the DedD family.

The protein resides in the cell inner membrane. Its function is as follows. Non-essential cell division protein that could be required for efficient cell constriction. In Escherichia coli (strain K12), this protein is Cell division protein DedD.